A 609-amino-acid chain; its full sequence is Zinc metalloproteinase-disintegrin-like VMP-III (609 aa).

Residues 1-20 (MIQVLLVTICLAAFPYQGSS) form the signal peptide. A propeptide spanning residues 21–189 (IILESGNVND…KKASQLVVTA (169 aa)) is cleaved from the precursor. Residues 198-393 (RFVELFLVVD…HNPECILNEP (196 aa)) enclose the Peptidase M12B domain. Glu201 and Asp285 together coordinate Ca(2+). 3 cysteine pairs are disulfide-bonded: Cys308–Cys388, Cys348–Cys372, and Cys350–Cys355. Residue His333 participates in Zn(2+) binding. Glu334 is an active-site residue. The Zn(2+) site is built by His337 and His343. Residue Asn371 is glycosylated (N-linked (GlcNAc...) asparagine). Cys388, Asn391, Val403, Asn406, Leu408, Glu410, Glu413, and Asp416 together coordinate Ca(2+). The Disintegrin domain maps to 401 to 487 (PPVCGNELLE…ECPADVFHKN (87 aa)). 14 cysteine pairs are disulfide-bonded: Cys404–Cys433, Cys415–Cys428, Cys417–Cys423, Cys427–Cys450, Cys441–Cys447, Cys446–Cys472, Cys459–Cys479, Cys466–Cys498, Cys491–Cys503, Cys510–Cys560, Cys525–Cys571, Cys538–Cys548, Cys555–Cys597, and Cys591–Cys602. Residues 465 to 467 (ECD) carry the D/ECD-tripeptide motif. Positions 467, 468, 470, 482, and 483 each coordinate Ca(2+).

It belongs to the venom metalloproteinase (M12B) family. P-III subfamily. P-IIIa sub-subfamily. Monomer. It depends on Zn(2+) as a cofactor. Expressed by the venom gland.

The protein resides in the secreted. Snake venom metalloproteinase that impairs hemostasis in the envenomed animal. The chain is Zinc metalloproteinase-disintegrin-like VMP-III from Crotalus viridis viridis (Prairie rattlesnake).